The following is a 2185-amino-acid chain: DNA polymerase epsilon catalytic subunit A (2185 aa).

4 residues coordinate Zn(2+): C2072, C2075, C2094, and C2097. A CysA-type zinc finger spans residues 2072–2097 (CEHCSYISDIDICRESMERVFICQSC). C2128, C2131, C2143, and C2145 together coordinate [4Fe-4S] cluster. Positions 2128 to 2145 (CNKCHKIKEDAMSPYCPC) match the CysB motif motif.

It belongs to the DNA polymerase type-B family. Heterotetramer. Consists of 4 subunits: POL2, DPB2, DPB3 and DPB4. [4Fe-4S] cluster serves as cofactor.

The protein resides in the nucleus. The catalysed reaction is DNA(n) + a 2'-deoxyribonucleoside 5'-triphosphate = DNA(n+1) + diphosphate. Functionally, DNA polymerase II participates in chromosomal DNA replication. In Kluyveromyces lactis (strain ATCC 8585 / CBS 2359 / DSM 70799 / NBRC 1267 / NRRL Y-1140 / WM37) (Yeast), this protein is DNA polymerase epsilon catalytic subunit A (POL2).